Consider the following 793-residue polypeptide: Phenylalanine--tRNA ligase beta subunit (793 aa).

The region spanning 39–148 (AKPFTGVVVG…EDAPVGLNIR (110 aa)) is the tRNA-binding domain. Residues 400 to 476 (PKREAIELNQ…RIHGYDNIQI (77 aa)) enclose the B5 domain. Mg(2+)-binding residues include Asp454, Asp460, Glu463, and Glu464. Residues 698–791 (SRFPSVRRDI…LENTYQATLR (94 aa)) enclose the FDX-ACB domain.

The protein belongs to the phenylalanyl-tRNA synthetase beta subunit family. Type 1 subfamily. As to quaternary structure, tetramer of two alpha and two beta subunits. The cofactor is Mg(2+).

It localises to the cytoplasm. The enzyme catalyses tRNA(Phe) + L-phenylalanine + ATP = L-phenylalanyl-tRNA(Phe) + AMP + diphosphate + H(+). This Acinetobacter baylyi (strain ATCC 33305 / BD413 / ADP1) protein is Phenylalanine--tRNA ligase beta subunit.